A 1169-amino-acid chain; its full sequence is C5a peptidase (1169 aa).

The N-terminal stretch at 1-31 (MRKKQKLPFDKLAIALMSTSILLNAQSDIKA) is a signal peptide. The disordered stretch occupies residues 33–111 (TVTEDTPATE…ETIRDLNDPS (79 aa)). Positions 48 to 67 (PQQTAVSEEAPSSSSKETNP) are enriched in polar residues. The region spanning 101–583 (KETIRDLNDP…AGAVDAKKAS (483 aa)) is the Peptidase S8 domain. A compositionally biased stretch (basic and acidic residues) spans 102-111 (ETIRDLNDPS). Catalysis depends on charge relay system residues Asp132, His195, and Ser514. The disordered stretch occupies residues 1028-1135 (NLLEGHSNKP…RDQLPTTNDK (108 aa)). Basic and acidic residues-rich tracts occupy residues 1033-1056 (HSNK…KPEQ), 1063-1073 (PDKKPEAKPEQ), and 1080-1092 (PDKK…EKDS). 4 consecutive repeat copies span residues 1036-1052 (KPEQ…TPET), 1053-1069 (KPEQ…KPEA), 1070-1086 (KPEQ…KPET), and 1087-1103 (KPEK…TPQK). A 4 X 17 AA tandem repeats region spans residues 1036–1103 (KPEQDGSDQV…GQTPGKTPQK (68 aa)). A compositionally biased stretch (polar residues) spans 1093–1108 (SGQTPGKTPQKGQPSR). The short motif at 1129-1133 (LPTTN) is the LPXTG sorting signal element. Pentaglycyl murein peptidoglycan amidated threonine is present on Thr1132. The propeptide at 1133-1169 (NDKDTNRLHLLKLVMTTFFFGLVAHIFKTKRQKETKK) is removed by sortase.

The protein belongs to the peptidase S8 family. Cleaved by SpeB protease; leading to its degradation. Degradation by SpeB is probably strictly regulated to preserve integrity of C5a peptidase.

It is found in the secreted. Its subcellular location is the cell wall. It carries out the reaction The primary cleavage site is at 67-His-|-Lys-68 in human C5a with a minor secondary cleavage site at 58-Ala-|-Ser-59.. In terms of biological role, this virulence factor of S.pyogenes specifically cleaves the human serum chemotaxin C5a at '68-Lys-|-Asp-69' bond near its C-terminus, destroying its ability to serve as a chemoattractant. This Streptococcus pyogenes serotype M3 (strain ATCC BAA-595 / MGAS315) protein is C5a peptidase (scpA).